The following is a 172-amino-acid chain: Probable metallophosphoesterase MTH_1774 (172 aa).

Asp8, His10, Asp37, Asn59, His85, His113, and His115 together coordinate a divalent metal cation.

It belongs to the metallophosphoesterase superfamily. YfcE family. It depends on a divalent metal cation as a cofactor.

The sequence is that of Probable metallophosphoesterase MTH_1774 from Methanothermobacter thermautotrophicus (strain ATCC 29096 / DSM 1053 / JCM 10044 / NBRC 100330 / Delta H) (Methanobacterium thermoautotrophicum).